The primary structure comprises 87 residues: Cell division topological specificity factor (87 aa).

Belongs to the MinE family.

In terms of biological role, prevents the cell division inhibition by proteins MinC and MinD at internal division sites while permitting inhibition at polar sites. This ensures cell division at the proper site by restricting the formation of a division septum at the midpoint of the long axis of the cell. This is Cell division topological specificity factor from Blochmanniella pennsylvanica (strain BPEN).